The sequence spans 454 residues: B-cell lymphoma 3 protein (454 aa).

A disordered region spans residues 1–50 (MPRCPAGAMDEGPVDLRTRPKAAGLPGAALPLRKRPLRAPSPEPAAPRGA). Low complexity predominate over residues 21-31 (KAAGLPGAALP). A Phosphoserine modification is found at serine 41. ANK repeat units follow at residues 134–163 (DGDTPLHIAVVQGNLPAVHRLVNLFQQGGR), 171–200 (LRQTPLHLAVITTLPSVVRLLVTAGASPMA), 204–235 (HGQTAAHLACEHRSPTCLRALLDSAAPGTLDL), 241–270 (DGLTALHVAVNTECQETVQLLLERGADIDA), 275–304 (SGRSPLIHAVENNSLSMVQLLLQHGANVNA), 308–337 (SGSSALHSASGRGLLPLVRTLVRSGADSSL), and 338–367 (KNCHNDTPLMVARSRRVIDILRGKATRPAS). Residues 360-454 (GKATRPASTS…VPPSPAPGGS (95 aa)) form a disordered region. Residues 365-381 (PASTSQPDPSPDRSANT) show a composition bias toward polar residues. A Phosphoserine modification is found at serine 374. Low complexity predominate over residues 382 to 404 (SPESSSRLSSNGLLSASPSSSPS). Residues serine 402 and serine 406 each carry the phosphoserine; by GSK3 modification. Residues 405-418 (QSPPRDPPGFPMAP) are compositionally biased toward pro residues. Positions 432-442 (LPFAGVLRGPG) are enriched in low complexity. The segment covering 443–454 (RPVPPSPAPGGS) has biased composition (pro residues).

As to quaternary structure, component of a complex consisting of the NF-kappa-B p52-p52 homodimer and BCL3. Component of a complex consisting of the NF-kappa-B p50-p50 homodimer and BCL3. Interacts with N4BP2, COPS5 and PIR. Interacts with CYLD. Polyubiquitinated. Ubiquitination via 'Lys-63'-linked ubiquitin chains is required for nuclear accumulation. Deubiquitinated by CYLD, which acts on 'Lys-63'-linked ubiquitin chains. Deubiquitination by CYLD prevents nuclear accumulation. Post-translationally, activated by phosphorylation.

It localises to the nucleus. Its subcellular location is the cytoplasm. It is found in the perinuclear region. Contributes to the regulation of transcriptional activation of NF-kappa-B target genes. In the cytoplasm, inhibits the nuclear translocation of the NF-kappa-B p50 subunit. In the nucleus, acts as transcriptional activator that promotes transcription of NF-kappa-B target genes. Contributes to the regulation of cell proliferation. The polypeptide is B-cell lymphoma 3 protein (BCL3) (Homo sapiens (Human)).